Reading from the N-terminus, the 477-residue chain is Lactate utilization protein B (477 aa).

2 consecutive 4Fe-4S ferredoxin-type domains span residues 304-334 and 353-382; these read GTQF…GHSY and YDTY…LHDL. [4Fe-4S] cluster is bound by residues cysteine 313, cysteine 316, cysteine 319, cysteine 323, cysteine 366, cysteine 369, and cysteine 373. The segment at 443 to 463 is disordered; the sequence is GPKPLQAWTNSRDFPMPDDEN.

The protein belongs to the LutB/YkgF family.

In terms of biological role, is involved in L-lactate degradation and allows cells to grow with lactate as the sole carbon source. Has probably a role as an electron transporter during oxidation of L-lactate. The chain is Lactate utilization protein B from Macrococcus caseolyticus (strain JCSC5402) (Macrococcoides caseolyticum).